A 124-amino-acid chain; its full sequence is Small ribosomal subunit protein uS12c (124 aa).

Belongs to the universal ribosomal protein uS12 family. In terms of assembly, part of the 30S ribosomal subunit.

Its subcellular location is the plastid. The protein localises to the chloroplast. In terms of biological role, with S4 and S5 plays an important role in translational accuracy. Located at the interface of the 30S and 50S subunits. This is Small ribosomal subunit protein uS12c (rps12) from Oryza nivara (Indian wild rice).